Here is a 120-residue protein sequence, read N- to C-terminus: MSKMKITNARRTNRVRTALRRTANGRPRLSVFRSSKHIYAQVIDDAKGETLASASSLEKTMRDAGNTGANIDAAKAVGKLVAERAVEKGVKEVVFDRGGYLYHGRVKALADAARESGLSF.

Part of the 50S ribosomal subunit; part of the 5S rRNA/L5/L18/L25 subcomplex. Contacts the 5S and 23S rRNAs.

In terms of biological role, this is one of the proteins that bind and probably mediate the attachment of the 5S RNA into the large ribosomal subunit, where it forms part of the central protuberance. The sequence is that of Large ribosomal subunit protein uL18 from Rhodopseudomonas palustris (strain ATCC BAA-98 / CGA009).